Consider the following 305-residue polypeptide: U6 small nuclear RNA (adenine-(43)-N(6))-methyltransferase (305 aa).

5 residues coordinate S-adenosyl-L-methionine: R87, G112, E135, T166, and N188. Positions 197 to 221 (PNPLGGNTRNPERRPAPNNARTGSQ) are disordered.

This sequence belongs to the methyltransferase superfamily. METTL16/RlmF family.

The enzyme catalyses adenosine in U6 snRNA + S-adenosyl-L-methionine = N(6)-methyladenosine in U6 snRNA + S-adenosyl-L-homocysteine + H(+). In terms of biological role, RNA N6-methyltransferase that mediates N6-methylation of adenine of U6 small nuclear RNA (U6 snRNA). This Drosophila melanogaster (Fruit fly) protein is U6 small nuclear RNA (adenine-(43)-N(6))-methyltransferase.